The chain runs to 325 residues: Phosphate import ATP-binding protein PstB (325 aa).

The ABC transporter domain maps to 79 to 320 (IDNYNLWYSN…PNNEKTKDYI (242 aa)). 111–118 (GPSGCGKS) contacts ATP.

Belongs to the ABC transporter superfamily. Phosphate importer (TC 3.A.1.7) family. The complex is composed of two ATP-binding proteins (PstB), two transmembrane proteins (PstC and PstA) and a solute-binding protein (PstS).

The protein localises to the cell membrane. It carries out the reaction phosphate(out) + ATP + H2O = ADP + 2 phosphate(in) + H(+). Functionally, part of the ABC transporter complex PstSACB involved in phosphate import. Responsible for energy coupling to the transport system. The chain is Phosphate import ATP-binding protein PstB from Mycoplasmoides gallisepticum (strain R(low / passage 15 / clone 2)) (Mycoplasma gallisepticum).